Consider the following 328-residue polypeptide: MSLIKIDQKAYEYNLRHIAKKIGSFQRLICVFKDNAYGHGAKLLAPLAKNLGVSFVAVKSEEEAQEIEEFFENILILSHRPHGNENSRFIYALNDISQVKKYKQDIKIHLKIDTGMHRNGICVENLEHAIDLIRSSDLKLTGMFTHFASADEMDGSFFVQKENFQKAKKIVKKYFSNLLFHSHNSAALFRGKIPEDEYCRVGLVQFGYGDSNLKRVLSLYAHRLSQRILQKGQSIGYGGIFTAAKDMEVATYDLGYADGLFRYNGKGELVLGNGKVMLGKMSMDSFSCENSGEEICVFKDADIWADFFHTINYEILVKLNPNIQRVLV.

The Proton acceptor; specific for D-alanine role is filled by Lys33. An N6-(pyridoxal phosphate)lysine modification is found at Lys33. Arg118 is a binding site for substrate. Tyr237 serves as the catalytic Proton acceptor; specific for L-alanine. Position 283 (Met283) interacts with substrate.

It belongs to the alanine racemase family. Pyridoxal 5'-phosphate serves as cofactor.

It carries out the reaction L-alanine = D-alanine. It participates in amino-acid biosynthesis; D-alanine biosynthesis; D-alanine from L-alanine: step 1/1. Catalyzes the interconversion of L-alanine and D-alanine. May also act on other amino acids. The chain is Alanine racemase (alr) from Campylobacter jejuni subsp. jejuni serotype O:6 (strain 81116 / NCTC 11828).